A 201-amino-acid chain; its full sequence is Putative 3-methyladenine DNA glycosylase (201 aa).

It belongs to the DNA glycosylase MPG family.

This Rhodopseudomonas palustris (strain HaA2) protein is Putative 3-methyladenine DNA glycosylase.